The following is a 160-amino-acid chain: Cyclic pyranopterin monophosphate synthase (160 aa).

Substrate contacts are provided by residues Leu74–His76 and Met112–Glu113. Asp127 is a catalytic residue.

Belongs to the MoaC family. As to quaternary structure, homohexamer; trimer of dimers.

The enzyme catalyses (8S)-3',8-cyclo-7,8-dihydroguanosine 5'-triphosphate = cyclic pyranopterin phosphate + diphosphate. The protein operates within cofactor biosynthesis; molybdopterin biosynthesis. Functionally, catalyzes the conversion of (8S)-3',8-cyclo-7,8-dihydroguanosine 5'-triphosphate to cyclic pyranopterin monophosphate (cPMP). The protein is Cyclic pyranopterin monophosphate synthase of Geobacter sulfurreducens (strain ATCC 51573 / DSM 12127 / PCA).